Consider the following 599-residue polypeptide: MVIEHIRNFSIIAHIDHGKSTLADRLLEFTGTVSAREKQDQFLDKMDLERERGITIKAQTVRLNYRADDGKDYILNLIDTPGHVDFTYEVSRSLTACEGGLLVVDASQGVEAQTLANVYLALDANLEVFVVLNKIDLPAAEPERVKAEIEEIIGLDTHDAVLASAKEGIGTKDILEEIVKKIPPPKGDATKPMKALLFDSWYDQYQGVIILVRLVDGTVKKGDKIQLMSNRKSYEVLKAGVFSPEMRETPMLSAGEVGFIIAGIREVADAKVGDTVTLLHNPCDAALPGYKEVKPMVFSGLYPIDTSQYEQLRDALAKLKLNDSSFSYDPETSLALGFGFRCGFLGLLHMEIIQERLEREFNLELITTAPTVVYRVHGTDGSLTSIQSANQLPPTQEIAYVEEPFILASIHVPNDFVGGILALCEEKRGVQREIKYLTPTRVMVVYELPLNEVVLDFYDRLKSITKGYASLDYELLDYRQSELVRLNIMINGEVVDALSLIIHKDKAYYRGRELVSKMKELIPRQMFEIAIQAAVGTKVIARETVKAMRKDVLAKCYGGDITRKRKLLEKQKEGKKRMKNVGNVELPQEAFLAILKVEG.

The region spanning 4-186 (EHIRNFSIIA…EIVKKIPPPK (183 aa)) is the tr-type G domain. GTP contacts are provided by residues 16-21 (DHGKST) and 133-136 (NKID).

Belongs to the TRAFAC class translation factor GTPase superfamily. Classic translation factor GTPase family. LepA subfamily.

It is found in the cell inner membrane. The enzyme catalyses GTP + H2O = GDP + phosphate + H(+). In terms of biological role, required for accurate and efficient protein synthesis under certain stress conditions. May act as a fidelity factor of the translation reaction, by catalyzing a one-codon backward translocation of tRNAs on improperly translocated ribosomes. Back-translocation proceeds from a post-translocation (POST) complex to a pre-translocation (PRE) complex, thus giving elongation factor G a second chance to translocate the tRNAs correctly. Binds to ribosomes in a GTP-dependent manner. This Citrifermentans bemidjiense (strain ATCC BAA-1014 / DSM 16622 / JCM 12645 / Bem) (Geobacter bemidjiensis) protein is Elongation factor 4.